A 365-amino-acid chain; its full sequence is Outer membrane lipoprotein A (365 aa).

Positions Met-1–Ala-19 are cleaved as a signal peptide. The interval Ala-19–Ser-121 is disordered. Cys-20 carries the N-palmitoyl cysteine lipid modification. Cys-20 is lipidated: S-diacylglycerol cysteine. Basic and acidic residues-rich tracts occupy residues Glu-48–Glu-68 and Asn-105–Ser-121.

It is found in the cell outer membrane. The sequence is that of Outer membrane lipoprotein A (omlA) from Actinobacillus pleuropneumoniae (Haemophilus pleuropneumoniae).